Here is a 612-residue protein sequence, read N- to C-terminus: Baculoviral IAP repeat-containing protein 2 (612 aa).

Residues 46 to 113 (ELYRMSTYSA…RQFYPSCSFV (68 aa)) form a BIR 1 repeat. At arginine 143 the chain carries Omega-N-methylarginine. Serine 153 carries the post-translational modification Phosphoserine. BIR repeat units lie at residues 177-243 (EEAR…CPFL) and 262-329 (HSAR…CEFL). Zn(2+)-binding residues include cysteine 299, cysteine 302, histidine 319, and cysteine 326. The CARD domain maps to 447–537 (MASGDLSLIR…TLYENLFVEK (91 aa)). An RING-type zinc finger spans residues 565-600 (CKVCMDREVSIVFIPCGHLVVCQECAPSLRKCPICR).

Belongs to the IAP family. Interacts with DIABLO/SMAC and with PRSS25; these interactions inhibit apoptotic suppressor activity. Interacts with CASP9. Interacts (via BIR domains) with TRAF2; the interaction is required for IKBKE ubiquitination. Interacts with E2F1, RIPK1, RIPK2, RIPK3, RIPK4, BIRC5/survivin and USP19. Interacts with HSP90AB1. Interacts with several death receptors, inclusing FAS, TNFRSF10A and TNFRSF10B. Recruited to TNFRSF10B in the absence of receptor stimulation. When TNFRSF10B is stimulated, further recruited to the receptor and cleaved by caspases. Proteolytic fragments remain associated with TNFRSF10B. Post-translationally, auto-ubiquitinated and degraded by the proteasome in apoptotic cells. Upon stimulation of death receptors, including TNFRSF10B, recruited to receptors and cleaved by caspases. Proteolytic fragments remain associated with the receptors. This cleavage presumably inactivates the protein. Expressed in heart, brain, spleen, lung, liver, skeletal muscle, kidney and testis.

The protein localises to the cytoplasm. The protein resides in the nucleus. It carries out the reaction S-ubiquitinyl-[E2 ubiquitin-conjugating enzyme]-L-cysteine + [acceptor protein]-L-lysine = [E2 ubiquitin-conjugating enzyme]-L-cysteine + N(6)-ubiquitinyl-[acceptor protein]-L-lysine.. The CARD domain inhibits the activation of E3 ubiquitin ligase activity by preventing RING domain dimerization and E2 ubiquitin donor binding and activation. The CARD domain-mediated autoinhibition of the E3 ubiquitin-protein ligase activity suppresses cell proliferation and migration. USP19 regulates the stability of BIRC2/c-IAP1 by preventing its ubiquitination. Its function is as follows. Multi-functional protein which regulates not only caspases and apoptosis, but also modulates inflammatory signaling and immunity, mitogenic kinase signaling, and cell proliferation, as well as cell invasion and metastasis. Acts as an E3 ubiquitin-protein ligase regulating NF-kappa-B signaling and regulates both canonical and non-canonical NF-kappa-B signaling by acting in opposite directions: acts as a positive regulator of the canonical pathway and suppresses constitutive activation of non-canonical NF-kappa-B signaling. The target proteins for its E3 ubiquitin-protein ligase activity include: RIPK1, RIPK2, RIPK3, RIPK4, CASP3, CASP7, CASP8, TRAF2, DIABLO/SMAC, MAP3K14/NIK, MAP3K5/ASK1, IKBKG/NEMO, IKBKE and MXD1/MAD1. Can also function as an E3 ubiquitin-protein ligase of the NEDD8 conjugation pathway, targeting effector caspases for neddylation and inactivation. Acts as an important regulator of innate immune signaling via regulation of Toll-like receptors (TLRs), Nodlike receptors (NLRs) and RIG-I like receptors (RLRs), collectively referred to as pattern recognition receptors (PRRs). Protects cells from spontaneous formation of the ripoptosome, a large multi-protein complex that has the capability to kill cancer cells in a caspase-dependent and caspase-independent manner. Suppresses ripoptosome formation by ubiquitinating RIPK1 and CASP8. Can stimulate the transcriptional activity of E2F1. Plays a role in the modulation of the cell cycle. The sequence is that of Baculoviral IAP repeat-containing protein 2 (Birc2) from Mus musculus (Mouse).